The following is a 729-amino-acid chain: Glutamine synthetase (729 aa).

Residues T85 to G174 form the GS beta-grasp domain. The GS catalytic domain occupies Y179–I615. 4 residues coordinate Mg(2+): E215, E217, E286, and E293. Residues N337 to G338 and G338 contribute to the L-glutamate site. H342 provides a ligand contact to Mg(2+). ATP is bound by residues S346 and R458. R458 is an L-glutamate binding site.

The protein belongs to the glutamine synthetase family. In terms of assembly, homohexamer. Mg(2+) is required as a cofactor.

Its subcellular location is the cytoplasm. The catalysed reaction is L-glutamate + NH4(+) + ATP = L-glutamine + ADP + phosphate + H(+). Its activity is regulated as follows. Inhibited by L-histidine (46%), L-arginine (38%) and L-methionine-DL-sulphoximine. The activity of this enzyme is not controlled by adenylation. Its function is as follows. Catalyzes the ATP-dependent biosynthesis of glutamine from glutamate and ammonia. This is Glutamine synthetase from Bacteroides fragilis (strain YCH46).